Consider the following 319-residue polypeptide: 12-(S)-hydroxy-5,8,10,14-eicosatetraenoic acid receptor (319 aa).

At 1–16 (MERTNCSAASTVVETA) the chain is on the extracellular side. N5 is a glycosylation site (N-linked (GlcNAc...) asparagine). The helical transmembrane segment at 17-37 (VGTMLTLECVLGLMGNAVALW) threads the bilayer. At 38-52 (TFFYRLKVWKPYAVY) the chain is on the cytoplasmic side. A helical membrane pass occupies residues 53–73 (LFNLVVADLLLATSLPFFAAF). At 74 to 91 (YLKGKTWKLGHMPCQVLL) the chain is on the extracellular side. A helical membrane pass occupies residues 92–110 (FLLAFSRGVGVAFLTTVAL). The Cytoplasmic segment spans residues 111-131 (DRYLRVVHPRLRVNLLSLRAA). The helical transmembrane segment at 132–152 (WGISSLIWLLMVVLTPQNLLT) threads the bilayer. Residues 153 to 180 (CRTTQNSTECPSFYPTGGAKAIATCQEV) are Extracellular-facing. Residues 181 to 201 (LFFLQVLLPFGLISFCNSGLI) form a helical membrane-spanning segment. The Cytoplasmic segment spans residues 202–219 (RTLQKRLRESDKQPRIRR). Residues 220–240 (ARVLVAIVLLLFGLCFLPSVL) form a helical membrane-spanning segment. Residues 241-265 (TRVLVHIFQEFKSCSVQQAIVRASD) are Extracellular-facing. Residues 266 to 284 (IAGSLTCLHSTLSPAIYCF) form a helical membrane-spanning segment. At 285-319 (SNPAFTHSYRKVLKSLRGRRKAAESPSDNLRDSYS) the chain is on the cytoplasmic side.

It belongs to the G-protein coupled receptor 1 family. Interacts with KRAS; in a farnesylation-dependent manner.

Its subcellular location is the cell membrane. Its function is as follows. High-affinity receptor for 12-(S)-hydroxy-5,8,10,14-eicosatetraenoic acid (12-S-HETE), with much lower affinities for other HETE isomers. 12-S-HETE is a eicosanoid, a 12-lipoxygenase (ALOX12) metabolite of arachidonic acid, involved in many physiologic and pathologic processes, such as cell growth, adhesion, inflammation and cancer promotion. 12-S-HETE-binding leads to activation of ERK1/2 (MAPK3/MAPK1), MEK, and NF-kappa-B pathways and leads to cell growth. Plays a crucial role for proliferation, survival and macropinocytosis of KRAS-dependent cancer cells by mediating the translocation of KRAS from the endoplasmic reticulum to the plasma membrane (PM) and its association with the PM. Contributes to enhanced immune responses by inducing dendrite protrusion of small intestinal CX3CR1(+) phagocytes for the uptake of luminal antigens. Also acts as a key receptor for 12-(S)-HETE-mediated liver ischemia reperfusion injury. Proton-sensing G protein-coupled receptor. This is 12-(S)-hydroxy-5,8,10,14-eicosatetraenoic acid receptor (Gpr31) from Mus musculus (Mouse).